Reading from the N-terminus, the 276-residue chain is Protein canopy homolog 3 (276 aa).

A signal peptide spans Met-1–Ala-16. The Saposin B-type domain maps to Asn-30 to Leu-269. 3 disulfides stabilise this stretch: Cys-32–Cys-190, Cys-35–Cys-178, and Cys-88–Cys-150. Residues Asn-137–Glu-162 are a coiled coil. Positions Ala-206–Leu-276 are disordered. Basic residues-rich tracts occupy residues Lys-210–Gly-219 and Lys-228–Ser-239. Basic and acidic residues predominate over residues Lys-240 to Glu-252.

This sequence belongs to the canopy family.

Its subcellular location is the endoplasmic reticulum. Functionally, toll-like receptor (TLR)-specific co-chaperone for HSP90B1. Required for proper TLR folding and hence controls TLR exit from the endoplasmic reticulum. Consequently, required for immune responses. This is Protein canopy homolog 3 (cnpy3) from Danio rerio (Zebrafish).